The primary structure comprises 208 residues: Putative archaetidylserine decarboxylase proenzyme (208 aa).

Ser-172 acts as the Schiff-base intermediate with substrate; via pyruvic acid in catalysis. Residue Ser-172 is modified to Pyruvic acid (Ser); by autocatalysis.

The protein belongs to the phosphatidylserine decarboxylase family. PSD-A subfamily. As to quaternary structure, heterodimer of a large membrane-associated beta subunit and a small pyruvoyl-containing alpha subunit. It depends on pyruvate as a cofactor. Post-translationally, is synthesized initially as an inactive proenzyme. Formation of the active enzyme involves a self-maturation process in which the active site pyruvoyl group is generated from an internal serine residue via an autocatalytic post-translational modification. Two non-identical subunits are generated from the proenzyme in this reaction, and the pyruvate is formed at the N-terminus of the alpha chain, which is derived from the carboxyl end of the proenzyme. The post-translation cleavage follows an unusual pathway, termed non-hydrolytic serinolysis, in which the side chain hydroxyl group of the serine supplies its oxygen atom to form the C-terminus of the beta chain, while the remainder of the serine residue undergoes an oxidative deamination to produce ammonia and the pyruvoyl prosthetic group on the alpha chain.

It is found in the cell membrane. It catalyses the reaction archaetidylserine + H(+) = archaetidylethanolamine + CO2. Functionally, catalyzes the formation of archaetidylethanolamine (PtdEtn) from archaetidylserine (PtdSer). In Methanosarcina acetivorans (strain ATCC 35395 / DSM 2834 / JCM 12185 / C2A), this protein is Putative archaetidylserine decarboxylase proenzyme.